Here is a 205-residue protein sequence, read N- to C-terminus: Small ribosomal subunit protein uS4 (205 aa).

Residues 26-46 form a disordered region; that stretch reads PVNRREYGPGQHGQRRKQKPS. Positions 94–157 constitute an S4 RNA-binding domain; that stretch reads RRLDAVVYRL…KQLAIVLDAV (64 aa).

Belongs to the universal ribosomal protein uS4 family. In terms of assembly, part of the 30S ribosomal subunit. Contacts protein S5. The interaction surface between S4 and S5 is involved in control of translational fidelity.

In terms of biological role, one of the primary rRNA binding proteins, it binds directly to 16S rRNA where it nucleates assembly of the body of the 30S subunit. Its function is as follows. With S5 and S12 plays an important role in translational accuracy. In Gluconobacter oxydans (strain 621H) (Gluconobacter suboxydans), this protein is Small ribosomal subunit protein uS4.